A 517-amino-acid polypeptide reads, in one-letter code: Cytochrome P450 monooxygenase cdmJ (517 aa).

A helical membrane pass occupies residues 15-35 (YMWSLTLFALCLSAILMFPFL). Asn404 carries N-linked (GlcNAc...) asparagine glycosylation. A heme-binding site is contributed by Cys451.

It belongs to the cytochrome P450 family. Requires heme as cofactor.

The protein localises to the membrane. It catalyses the reaction 3-hydroxypentacecilide A + NADPH + O2 + H(+) = chrodrimanin F + NADP(+) + H2O. The enzyme catalyses chrodrimanin C + NADPH + O2 + H(+) = chrodrimanin H + NADP(+) + H2O. It carries out the reaction verruculide A + NADPH + O2 + H(+) = chrodrimanin E + NADP(+) + H2O. The catalysed reaction is chrodrimanin T + NADPH + O2 + H(+) = chrodrimanin A + NADP(+) + H2O. It participates in secondary metabolite biosynthesis; terpenoid biosynthesis. Its function is as follows. Cytochrome P450 monooxygenase; part of the gene cluster that mediates the biosynthesis of chrodrimanin B, a meroterpenoid that acts as a potent blocker of insect GABA-gated chloride channels. The first step of the pathway is the biosynthesis of 6-hydroxymellein by the polyketide synthase cdmE. The prenyltransferase cdmH acts as a 6-hydroxymellein 5-farnesyltransferase and produces the hydrophobic metabolite verruculide C. The FAD-dependent monooxygenase cdmI further converts verruculide C into verruculide B. The terpene cyclase cdmG then produced the pentacyclic molecule 3-hydroxypentacecilide A, the backbone structure of chrodrimanin B, via folding the farnesyl moiety of the substrate into the chair-boat conformation. The short-chain dehydrogenase/reductase cdmF functions as the 3-OH dehydrogenase that oxidizes the C-3 hydroxyl group of 3-hydroxypentacecilide A and produces chrodrimanin C, the dehydrogenated product of 3-hydroxypentacecilide A. The cytochrome P450 monooxygenase cdmJ then accepts both 3-hydroxypentacecilide A and chrodrimanin C and functions as a C-7-beta-hydroxylase to produce respectively chrodrimanin H and chrodrimanin F. The dioxygenase cdmA accepts chrodrimanin H to afford chrodrimanin E, which is further transformed to chrodrimanin A by the dioxygenase cdmD. CdmA can also accept chrodrimanin C as substrate to convert it into verruculide A, which is further converted into chrodrimanin T by cdmD. The last step of the biosynthesis is proposed to be performed by the acetyltransferase cdmC which acetylates chrodrimanin A to yield chrodrimanin B. The pathway may also lead to the production of additional shunt products, including chrodrimanins T and U. This chain is Cytochrome P450 monooxygenase cdmJ, found in Talaromyces verruculosus (Penicillium verruculosum).